Consider the following 115-residue polypeptide: Guanylin (115 aa).

The N-terminal stretch at 1-21 is a signal peptide; the sequence is MNACVLSVLCLLGAVAVLVEG. A propeptide spanning residues 22-100 is cleaved from the precursor; the sequence is VTVQDGDLSF…LQRLEAIAQD (79 aa). 3 disulfide bridges follow: Cys69–Cys82, Cys104–Cys112, and Cys107–Cys115.

The protein belongs to the guanylin family.

The protein resides in the secreted. In terms of biological role, endogenous activator of intestinal guanylate cyclase. It stimulates this enzyme through the same receptor binding region as the heat-stable enterotoxins. This is Guanylin (GUCA2A) from Notomys alexis (Spinifex hopping mouse).